A 350-amino-acid chain; its full sequence is MSIEVRNLSKRFGQFRALNDVSLHIETGELVALLGPSGCGKTTLLRIIAGLESADNGSVLFAGEDATSVDVRQRQVGFVFQHYALFKHMTVFENVAFGLRVKHRSQRPSEDQIQRKVHDLLGLVQLDWLADRYPAQLSGGQRQRIALARALAVEPRVLLLDEPFGALDAKVRKELRRWLRRLHDELNVASVFVTHDQEEALEVADRVVLMNAGRIEQVGTPREVWEGPATPFVYGFLGDVNQLQGVASRGVWEGAGLSLPAPELAQAENQRATAYVRPHEFLYTPAAQEIIAKNYYRPIDKTVAAKYESKFPKVKLVTIDDKIFGGWRKAQKDHFSDGGTFDQIYQPQKK.

The ABC transporter domain occupies 3-237; the sequence is IEVRNLSKRF…PATPFVYGFL (235 aa). 35–42 is an ATP binding site; it reads GPSGCGKT.

The protein belongs to the ABC transporter superfamily. Sulfate/tungstate importer (TC 3.A.1.6) family.

The protein localises to the mitochondrion. The catalysed reaction is sulfate(out) + ATP + H2O = sulfate(in) + ADP + phosphate + H(+). It catalyses the reaction thiosulfate(out) + ATP + H2O = thiosulfate(in) + ADP + phosphate + H(+). Functionally, part of the ABC transporter complex involved in sulfate/thiosulfate import. Responsible for energy coupling to the transport system. The protein is Sulfate/thiosulfate import ATP-binding protein cysA (CYSA) of Cucumis sativus (Cucumber).